The chain runs to 259 residues: HTH-type transcriptional regulator Rv1931c (259 aa).

The segment covering 104–121 (SHRRHRPRAGTGRRRPRH) has biased composition (basic residues). Residues 104–170 (SHRRHRPRAG…GAGGHRGRAG (67 aa)) are disordered. One can recognise an HTH araC/xylS-type domain in the interval 174–257 (RIGELAQRAA…GISPDQYRKA (84 aa)). 2 consecutive DNA-binding regions (H-T-H motif) follow at residues 176–197 (GELA…SDEV) and 224–247 (VVAI…IRRV).

In terms of biological role, controls the expression of genes important for virulence. The polypeptide is HTH-type transcriptional regulator Rv1931c (Mycobacterium tuberculosis (strain ATCC 25618 / H37Rv)).